The following is a 541-amino-acid chain: Glucose-6-phosphate isomerase (541 aa).

The Proton donor role is filled by Glu347. Active-site residues include His378 and Lys506.

Belongs to the GPI family.

Its subcellular location is the cytoplasm. It carries out the reaction alpha-D-glucose 6-phosphate = beta-D-fructose 6-phosphate. It participates in carbohydrate biosynthesis; gluconeogenesis. The protein operates within carbohydrate degradation; glycolysis; D-glyceraldehyde 3-phosphate and glycerone phosphate from D-glucose: step 2/4. Catalyzes the reversible isomerization of glucose-6-phosphate to fructose-6-phosphate. In Francisella tularensis subsp. holarctica (strain OSU18), this protein is Glucose-6-phosphate isomerase.